Reading from the N-terminus, the 1420-residue chain is DNA-directed RNA polymerase subunit beta'' (1420 aa).

Residues cysteine 220, cysteine 295, cysteine 302, and cysteine 305 each coordinate Zn(2+).

Belongs to the RNA polymerase beta' chain family. RpoC2 subfamily. In terms of assembly, in plastids the minimal PEP RNA polymerase catalytic core is composed of four subunits: alpha, beta, beta', and beta''. When a (nuclear-encoded) sigma factor is associated with the core the holoenzyme is formed, which can initiate transcription. The cofactor is Zn(2+).

It is found in the plastid. It localises to the chloroplast. It carries out the reaction RNA(n) + a ribonucleoside 5'-triphosphate = RNA(n+1) + diphosphate. Functionally, DNA-dependent RNA polymerase catalyzes the transcription of DNA into RNA using the four ribonucleoside triphosphates as substrates. The chain is DNA-directed RNA polymerase subunit beta'' from Adiantum capillus-veneris (Maidenhair fern).